Consider the following 118-residue polypeptide: Large ribosomal subunit protein bL20 (118 aa).

Belongs to the bacterial ribosomal protein bL20 family.

Binds directly to 23S ribosomal RNA and is necessary for the in vitro assembly process of the 50S ribosomal subunit. It is not involved in the protein synthesizing functions of that subunit. This chain is Large ribosomal subunit protein bL20, found in Lactobacillus acidophilus (strain ATCC 700396 / NCK56 / N2 / NCFM).